We begin with the raw amino-acid sequence, 188 residues long: MKELLYYTFIETEVTGAFLVFREKTQNLVFASLGNDKLFLLGKVEGFLKKHEKQDTMYDLQELKEAETYKKSIENYTICLENKMPLPSGAIPFEFLFGTDFQRKVWNELLNVEHGHVATYGDIAKRIGKPTAARSVGRACGSNNLALLVPCHRIVGSNRKLTGYKWSCKLKEQLLNNEKENSLSLSRL.

Tyrosine 120, glycine 121, and arginine 134 together coordinate DNA. Cysteine 151 acts as the Nucleophile; methyl group acceptor in catalysis. Serine 157 contacts DNA.

This sequence belongs to the MGMT family.

It is found in the nucleus. The catalysed reaction is a 6-O-methyl-2'-deoxyguanosine in DNA + L-cysteinyl-[protein] = S-methyl-L-cysteinyl-[protein] + a 2'-deoxyguanosine in DNA. It carries out the reaction a 4-O-methyl-thymidine in DNA + L-cysteinyl-[protein] = a thymidine in DNA + S-methyl-L-cysteinyl-[protein]. Involved in the cellular defense against the biological effects of O6-methylguanine (O6-MeG) and O4-methylthymine (O4-MeT) in DNA. Repairs the methylated nucleobase in DNA by stoichiometrically transferring the methyl group to a cysteine residue in the enzyme. This is a suicide reaction: the enzyme is irreversibly inactivated. Prefers double-stranded DNA over single-stranded DNA as substrate. The protein is Methylated-DNA--protein-cysteine methyltransferase (MGT1) of Saccharomyces cerevisiae (strain YJM789) (Baker's yeast).